We begin with the raw amino-acid sequence, 460 residues long: 3-isopropylmalate dehydratase large subunit (460 aa).

Positions 338, 398, and 401 each coordinate [4Fe-4S] cluster.

It belongs to the aconitase/IPM isomerase family. LeuC type 1 subfamily. In terms of assembly, heterodimer of LeuC and LeuD. The cofactor is [4Fe-4S] cluster.

The catalysed reaction is (2R,3S)-3-isopropylmalate = (2S)-2-isopropylmalate. It functions in the pathway amino-acid biosynthesis; L-leucine biosynthesis; L-leucine from 3-methyl-2-oxobutanoate: step 2/4. Catalyzes the isomerization between 2-isopropylmalate and 3-isopropylmalate, via the formation of 2-isopropylmaleate. This is 3-isopropylmalate dehydratase large subunit from Streptococcus gordonii (strain Challis / ATCC 35105 / BCRC 15272 / CH1 / DL1 / V288).